The primary structure comprises 736 residues: Dynamin-1-like protein (736 aa).

Residue Met1 is modified to N-acetylmethionine. One can recognise a Dynamin-type G domain in the interval 22–302; it reads IIQLPQIVVV…LMHHIRDCLP (281 aa). The tract at residues 32 to 39 is G1 motif; sequence GTQSSGKS. Residue 32–40 coordinates GTP; it reads GTQSSGKSS. The interval 58–60 is G2 motif; that stretch reads VTR. The interval 146–149 is G3 motif; that stretch reads DLPG. Positions 215–218 are G4 motif; that stretch reads TKLD. GTP is bound by residues 215–221 and 246–249; these read TKLDLMD and NRSQ. Residues 245–248 are G5 motif; the sequence is VNRS. Residues 344–489 form a middle domain region; it reads YCNTIEGTAK…NEMVHNLVAI (146 aa). The tract at residues 448 to 685 is interaction with GSK3B; it reads NYSTQELLRF…NHVKDTLQSE (238 aa). The b domain stretch occupies residues 502-569; that stretch reads ADACGLMNNN…IQDNRRETKN (68 aa). The interval 522 to 554 is disordered; it reads RELPSAGSRDKSSKVPSALAPASQEPPPAASAE. Ser529 is modified (phosphoserine). Glycyl lysine isopeptide (Lys-Gly) (interchain with G-Cter in SUMO) cross-links involve residues Lys532, Lys535, Lys558, and Lys568. The tract at residues 542–736 is C-terminal dimerization domain; that stretch reads PASQEPPPAA…IAEIRETHLW (195 aa). A disordered region spans residues 566–588; the sequence is ETKNVPSAGGGIGDGGQEPTTGN. O-linked (GlcNAc) threonine glycans are attached at residues Thr585 and Thr586. Lys594 is covalently cross-linked (Glycyl lysine isopeptide (Lys-Gly) (interchain with G-Cter in SUMO)). At Lys597 the chain carries N6-acetyllysine; alternate. Lys597 is covalently cross-linked (Glycyl lysine isopeptide (Lys-Gly) (interchain with G-Cter in SUMO); alternate). A Glycyl lysine isopeptide (Lys-Gly) (interchain with G-Cter in SUMO) cross-link involves residue Lys606. Phosphoserine is present on Ser607. A Glycyl lysine isopeptide (Lys-Gly) (interchain with G-Cter in SUMO) cross-link involves residue Lys608. Ser616 is subject to Phosphoserine; by PINK1. Ser637 is modified (phosphoserine; by CAMK1 and PKA). Cys644 is modified (S-nitrosocysteine). The GED domain occupies 644–735; that stretch reads CEVIERLIKS…IIAEIRETHL (92 aa). The important for homodimerization stretch occupies residues 654–668; the sequence is YFLIVRKNIQDSVPK.

It belongs to the TRAFAC class dynamin-like GTPase superfamily. Dynamin/Fzo/YdjA family. In terms of assembly, homotetramer; dimerizes through the N-terminal GTP-middle region of one molecule binding to the GED domain of another DNM1L molecule. Oligomerizes in a GTP-dependent manner to form membrane-associated tubules with a spiral pattern. Interacts with GSK3B and MARCHF5. Interacts (via the GTPase and B domains) with UBE2I; the interaction promotes sumoylation of DNM1L, mainly in its B domain. Interacts with PPP3CA; the interaction dephosphorylates DNM1L and regulates its transition to mitochondria. Interacts with BCL2L1 isoform BCL-X(L) and CLTA; DNM1L and BCL2L1 isoform BCL-X(L) may form a complex in synaptic vesicles that also contains clathrin and MFF. Interacts with MFF; the interaction is inhibited by C11orf65/MFI. Interacts with FIS1. Interacts with MIEF2 and MIEF1; GTP-dependent, regulates GTP hydrolysis and DNM1L oligomerization. Interacts with PGAM5; this interaction leads to dephosphorylation at Ser-656 and activation of GTPase activity and eventually to mitochondria fragmentation. Interacts with RALBP1; during mitosis, recruits DNM1L to the mitochondrion and mediates its activation by the mitotic kinase cyclin B-CDK1. Interacts with FUNDC1; this interaction recruits DNM1L/DRP1 at ER-mitochondria contact sites. Post-translationally, phosphorylation/dephosphorylation events on two sites near the GED domain regulate mitochondrial fission. Phosphorylation on Ser-637 inhibits mitochondrial fission probably through preventing intramolecular interaction. Dephosphorylated on this site by PPP3CA which promotes mitochondrial fission. Phosphorylation on Ser-616 by Pink1 activates the GTPase activity and promotes mitochondrial fission. Phosphorylated in a circadian manner at Ser-637. Dephosphorylated by PGAM5. Sumoylated on various lysine residues within the B domain, probably by MUL1. Sumoylation positively regulates mitochondrial fission. Desumoylated by SENP5 during G2/M transition of mitosis. Appears to be linked to its catalytic activity. In terms of processing, S-nitrosylation increases DNM1L dimerization, mitochondrial fission and causes neuronal damage. Post-translationally, O-GlcNAcylation augments the level of the GTP-bound active form of DNM1L and induces translocation from the cytoplasm to mitochondria in cardiomyocytes. It also decreases phosphorylation at Ser-637. Ubiquitination by MARCHF5 affects mitochondrial morphology. As to expression, expressed in the cerebellum and in several regions of the cerebrum and diencephalon. Strongly expressed in the cerebellar Purkinje cells and in the pontile giant neurons. Widely expressed. In terms of tissue distribution, brain-specific. As to expression, brain-specific (at protein level). Expressed in most of the subregions of the brain, including the cerebellum, midbrain, hippocampus, striatum, cerebral cortex, and brain stem. Weakly expressed in the olfactory bulb.

Its subcellular location is the cytoplasm. The protein resides in the cytosol. It is found in the golgi apparatus. The protein localises to the endomembrane system. It localises to the mitochondrion outer membrane. Its subcellular location is the peroxisome. The protein resides in the membrane. It is found in the clathrin-coated pit. The protein localises to the cytoplasmic vesicle. It localises to the secretory vesicle. Its subcellular location is the synaptic vesicle membrane. The protein resides in the lysosome. It is found in the late endosome. The protein localises to the cell membrane. It localises to the postsynaptic density. It catalyses the reaction GTP + H2O = GDP + phosphate + H(+). Functionally, functions in mitochondrial and peroxisomal division. Mediates membrane fission through oligomerization into membrane-associated tubular structures that wrap around the scission site to constrict and sever the mitochondrial membrane through a GTP hydrolysis-dependent mechanism. The specific recruitment at scission sites is mediated by membrane receptors like MFF, MIEF1 and MIEF2 for mitochondrial membranes. While the recruitment by the membrane receptors is GTP-dependent, the following hydrolysis of GTP induces the dissociation from the receptors and allows DNM1L filaments to curl into closed rings that are probably sufficient to sever a double membrane. Acts downstream of PINK1 to promote mitochondrial fission in a PRKN-dependent manner. Plays an important role in mitochondrial fission during mitosis. Required for formation of endocytic vesicles. Through its function in mitochondrial division, ensures the survival of at least some types of postmitotic neurons, including Purkinje cells, by suppressing oxidative damage. Required for normal brain development, including that of cerebellum. Facilitates developmentally regulated apoptosis during neural tube formation. Required for a normal rate of cytochrome c release and caspase activation during apoptosis; this requirement may depend upon the cell type and the physiological apoptotic cues. Proposed to regulate synaptic vesicle membrane dynamics through association with BCL2L1 isoform Bcl-X(L) which stimulates its GTPase activity in synaptic vesicles; the function may require its recruitment by MFF to clathrin-containing vesicles. Required for programmed necrosis execution. Rhythmic control of its activity following phosphorylation at Ser-637 is essential for the circadian control of mitochondrial ATP production. In terms of biological role, regulates postsynaptic clathrin-mediated endocytosis by positioning the endocytic zone at the postsynaptic density, independently of mitochondrial division. The sequence is that of Dynamin-1-like protein from Mus musculus (Mouse).